Here is a 524-residue protein sequence, read N- to C-terminus: MTRRALVSVSDKTGLVPFARRLAALGVELLSTGGTQKALAEAGVPVVGVGDYTQAPEILGGRVKTLHPRVHGGILYRRGLASDEADVKARDIPPIDLVVVNLYPFREAVAAGKPFETCVEEIDIGGPTMVRSAAKNSAHVGVVVDPADYEKVAAELEATRTLSAATRFYLMKKAFAHTAAYDAAISEYLTAREAPEAAPAHFPATLAAVYTKAYDLRYGENPHQAGAFYRAAREPEEPSVAFADVLQGKELSYNNLLDLQAALAGVMEFDETACVIIKHNTPCGVSTGRTAGEAFARARECDPVSAFGGIVALNRPVDEATASELTSLFLECVIAPGYDAAARAALAVKKNLRLLEAPRLGAARATWRRRPEEGRELRSIPGGLLVMDRDLGSVRRDDCKVMTKRAPTEQEWKDLLFAWKVVKHVKSNAIVFAKDDRTVAIGGGQTSRVESVKTAVMKAALDVRGSSVGSDAFFPFADGVEEIIKAGATAIIQPGGSMRDAEVIAAADKAGIAMVATGMRHFRH.

Residues 1–144 enclose the MGS-like domain; sequence MTRRALVSVS…KNSAHVGVVV (144 aa).

Belongs to the PurH family.

It carries out the reaction (6R)-10-formyltetrahydrofolate + 5-amino-1-(5-phospho-beta-D-ribosyl)imidazole-4-carboxamide = 5-formamido-1-(5-phospho-D-ribosyl)imidazole-4-carboxamide + (6S)-5,6,7,8-tetrahydrofolate. The catalysed reaction is IMP + H2O = 5-formamido-1-(5-phospho-D-ribosyl)imidazole-4-carboxamide. Its pathway is purine metabolism; IMP biosynthesis via de novo pathway; 5-formamido-1-(5-phospho-D-ribosyl)imidazole-4-carboxamide from 5-amino-1-(5-phospho-D-ribosyl)imidazole-4-carboxamide (10-formyl THF route): step 1/1. It functions in the pathway purine metabolism; IMP biosynthesis via de novo pathway; IMP from 5-formamido-1-(5-phospho-D-ribosyl)imidazole-4-carboxamide: step 1/1. This Anaeromyxobacter dehalogenans (strain 2CP-1 / ATCC BAA-258) protein is Bifunctional purine biosynthesis protein PurH.